A 124-amino-acid chain; its full sequence is Histone H2A, embryonic (124 aa).

Over residues 1 to 18 (MSGRGKSGKARTKAKTRS) the composition is skewed to basic residues. A disordered region spans residues 1–21 (MSGRGKSGKARTKAKTRSSRA). Ser2 carries the N-acetylserine modification. At Ser2 the chain carries Phosphoserine. N5-methylglutamine is present on Gln104. Lys119 is covalently cross-linked (Glycyl lysine isopeptide (Lys-Gly) (interchain with G-Cter in ubiquitin)).

It belongs to the histone H2A family. As to quaternary structure, the nucleosome is a histone octamer containing two molecules each of H2A, H2B, H3 and H4 assembled in one H3-H4 heterotetramer and two H2A-H2B heterodimers. The octamer wraps approximately 147 bp of DNA. Monoubiquitination of Lys-119 gives a specific tag for epigenetic transcriptional repression. Post-translationally, phosphorylation of Ser-2 directly represses transcription.

It localises to the nucleus. It is found in the chromosome. Its function is as follows. Core component of nucleosome. Nucleosomes wrap and compact DNA into chromatin, limiting DNA accessibility to the cellular machineries which require DNA as a template. Histones thereby play a central role in transcription regulation, DNA repair, DNA replication and chromosomal stability. DNA accessibility is regulated via a complex set of post-translational modifications of histones, also called histone code, and nucleosome remodeling. The chain is Histone H2A, embryonic from Psammechinus miliaris (Green sea urchin).